The sequence spans 103 residues: Putative membrane protein insertion efficiency factor (103 aa).

The protein belongs to the UPF0161 family.

Its subcellular location is the cell membrane. In terms of biological role, could be involved in insertion of integral membrane proteins into the membrane. The sequence is that of Putative membrane protein insertion efficiency factor from Clavibacter sepedonicus (Clavibacter michiganensis subsp. sepedonicus).